The chain runs to 157 residues: Crossover junction endodeoxyribonuclease RuvC (157 aa).

Residues aspartate 7, glutamate 67, and aspartate 139 contribute to the active site. 3 residues coordinate Mg(2+): aspartate 7, glutamate 67, and aspartate 139.

The protein belongs to the RuvC family. Homodimer which binds Holliday junction (HJ) DNA. The HJ becomes 2-fold symmetrical on binding to RuvC with unstacked arms; it has a different conformation from HJ DNA in complex with RuvA. In the full resolvosome a probable DNA-RuvA(4)-RuvB(12)-RuvC(2) complex forms which resolves the HJ. It depends on Mg(2+) as a cofactor.

The protein resides in the cytoplasm. It carries out the reaction Endonucleolytic cleavage at a junction such as a reciprocal single-stranded crossover between two homologous DNA duplexes (Holliday junction).. In terms of biological role, the RuvA-RuvB-RuvC complex processes Holliday junction (HJ) DNA during genetic recombination and DNA repair. Endonuclease that resolves HJ intermediates. Cleaves cruciform DNA by making single-stranded nicks across the HJ at symmetrical positions within the homologous arms, yielding a 5'-phosphate and a 3'-hydroxyl group; requires a central core of homology in the junction. The consensus cleavage sequence is 5'-(A/T)TT(C/G)-3'. Cleavage occurs on the 3'-side of the TT dinucleotide at the point of strand exchange. HJ branch migration catalyzed by RuvA-RuvB allows RuvC to scan DNA until it finds its consensus sequence, where it cleaves and resolves the cruciform DNA. The polypeptide is Crossover junction endodeoxyribonuclease RuvC (Prochlorococcus marinus (strain MIT 9312)).